Here is a 455-residue protein sequence, read N- to C-terminus: Glutamyl-tRNA reductase (455 aa).

Substrate-binding positions include threonine 49–arginine 52, serine 109, glutamate 114–glutamine 116, and glutamine 120. Cysteine 50 acts as the Nucleophile in catalysis. Residue glycine 190–glycine 195 participates in NADP(+) binding.

It belongs to the glutamyl-tRNA reductase family. In terms of assembly, homodimer.

It carries out the reaction (S)-4-amino-5-oxopentanoate + tRNA(Glu) + NADP(+) = L-glutamyl-tRNA(Glu) + NADPH + H(+). It functions in the pathway porphyrin-containing compound metabolism; protoporphyrin-IX biosynthesis; 5-aminolevulinate from L-glutamyl-tRNA(Glu): step 1/2. Its function is as follows. Catalyzes the NADPH-dependent reduction of glutamyl-tRNA(Glu) to glutamate 1-semialdehyde (GSA). The polypeptide is Glutamyl-tRNA reductase (Salinispora arenicola (strain CNS-205)).